Here is a 67-residue protein sequence, read N- to C-terminus: Preprofallaxidin-1 (67 aa).

The N-terminal stretch at 1-22 is a signal peptide; sequence MASLKKSLFLVLFLGMVSLSIC. The propeptide occupies 23–46; that stretch reads DKEKREGENEEEEEEHEEESEEKR. The tract at residues 24–46 is disordered; that stretch reads KEKREGENEEEEEEHEEESEEKR. The segment covering 30–42 has biased composition (acidic residues); sequence ENEEEEEEHEEES.

In terms of tissue distribution, expressed by the skin glands.

The protein localises to the secreted. Functionally, fallaxidin-4.1 shows antibacterial activity against the Gram-positive bacteria L.lactis (MIC=12 uM), M.luteus (MIC=100 uM), S.epidermidis (MIC=100 uM) and S.uberis (MIC=50 uM). No antibacterial activity against the Gram-positive bacteria B.cereus, E.faecalis, L.innocua, S.aureus, or the Gram-negative bacteria E.cloacae and E.coli. Inhibits the formation of NO by neuronal nitric oxide synthase with an IC(50) of 13.3 uM. The sequence is that of Preprofallaxidin-1 from Litoria fallax (Eastern dwarf tree frog).